We begin with the raw amino-acid sequence, 326 residues long: tRNA-modifying protein YgfZ (326 aa).

Folate is bound by residues Trp-27 and Trp-189.

It belongs to the tRNA-modifying YgfZ family.

It is found in the cytoplasm. Functionally, folate-binding protein involved in regulating the level of ATP-DnaA and in the modification of some tRNAs. It is probably a key factor in regulatory networks that act via tRNA modification, such as initiation of chromosomal replication. The protein is tRNA-modifying protein YgfZ of Shigella dysenteriae serotype 1 (strain Sd197).